The primary structure comprises 136 residues: Plastocyanin (136 aa).

The first 34 residues, 1–34 (MSLVFNLVKRLQLILLSLVVGGLAVAFLSNPAAA), serve as a signal peptide directing secretion. One can recognise a Plastocyanin-like domain in the interval 35–136 (ETYIVKMGSD…GMVGKIIVNG (102 aa)). Cu cation is bound by residues H73, C120, H123, and M128.

The protein belongs to the plastocyanin family. The cofactor is Cu(2+).

Its subcellular location is the cellular thylakoid membrane. In terms of biological role, participates in electron transfer between P700 and the cytochrome b6-f complex in photosystem I. This chain is Plastocyanin, found in Synechococcus sp. (strain JA-2-3B'a(2-13)) (Cyanobacteria bacterium Yellowstone B-Prime).